The sequence spans 367 residues: Flagellar P-ring protein (367 aa).

The N-terminal stretch at 1-22 (MRRMLVIRWILAIHLIATQVFA) is a signal peptide.

Belongs to the FlgI family. In terms of assembly, the basal body constitutes a major portion of the flagellar organelle and consists of four rings (L,P,S, and M) mounted on a central rod.

It is found in the periplasm. Its subcellular location is the bacterial flagellum basal body. Assembles around the rod to form the L-ring and probably protects the motor/basal body from shearing forces during rotation. The protein is Flagellar P-ring protein of Legionella pneumophila (strain Corby).